The chain runs to 173 residues: Lipoprotein signal peptidase (173 aa).

Helical transmembrane passes span 67–87 and 92–112; these read WISLLVSVGLCVYALVGPHLG and MGFGLLLGGAVGNGFDRFAFG. Active-site residues include D116 and D132. The chain crosses the membrane as a helical span at residues 125–145; it reads FPVFNGADIAINLGLACLLIG. The disordered stretch occupies residues 151–173; the sequence is SRTPAPARPASKQIREPTDTTGG. Residues 163-173 show a composition bias toward basic and acidic residues; that stretch reads QIREPTDTTGG.

Belongs to the peptidase A8 family.

It is found in the cell inner membrane. The enzyme catalyses Release of signal peptides from bacterial membrane prolipoproteins. Hydrolyzes -Xaa-Yaa-Zaa-|-(S,diacylglyceryl)Cys-, in which Xaa is hydrophobic (preferably Leu), and Yaa (Ala or Ser) and Zaa (Gly or Ala) have small, neutral side chains.. It functions in the pathway protein modification; lipoprotein biosynthesis (signal peptide cleavage). In terms of biological role, this protein specifically catalyzes the removal of signal peptides from prolipoproteins. The chain is Lipoprotein signal peptidase from Gloeobacter violaceus (strain ATCC 29082 / PCC 7421).